Here is a 305-residue protein sequence, read N- to C-terminus: UDP-3-O-acyl-N-acetylglucosamine deacetylase (305 aa).

Zn(2+) contacts are provided by H79, H238, and D242. The Proton donor role is filled by H265.

This sequence belongs to the LpxC family. It depends on Zn(2+) as a cofactor.

The catalysed reaction is a UDP-3-O-[(3R)-3-hydroxyacyl]-N-acetyl-alpha-D-glucosamine + H2O = a UDP-3-O-[(3R)-3-hydroxyacyl]-alpha-D-glucosamine + acetate. Its pathway is glycolipid biosynthesis; lipid IV(A) biosynthesis; lipid IV(A) from (3R)-3-hydroxytetradecanoyl-[acyl-carrier-protein] and UDP-N-acetyl-alpha-D-glucosamine: step 2/6. Its function is as follows. Catalyzes the hydrolysis of UDP-3-O-myristoyl-N-acetylglucosamine to form UDP-3-O-myristoylglucosamine and acetate, the committed step in lipid A biosynthesis. This chain is UDP-3-O-acyl-N-acetylglucosamine deacetylase, found in Vibrio vulnificus (strain CMCP6).